We begin with the raw amino-acid sequence, 628 residues long: 1-deoxy-D-xylulose-5-phosphate synthase (628 aa).

Thiamine diphosphate-binding positions include histidine 77 and 118–120 (GHS). Aspartate 150 serves as a coordination point for Mg(2+). Residues 151-152 (GA), asparagine 180, tyrosine 288, and glutamate 369 contribute to the thiamine diphosphate site. Residue asparagine 180 coordinates Mg(2+).

Belongs to the transketolase family. DXPS subfamily. Homodimer. Mg(2+) is required as a cofactor. Thiamine diphosphate serves as cofactor.

The catalysed reaction is D-glyceraldehyde 3-phosphate + pyruvate + H(+) = 1-deoxy-D-xylulose 5-phosphate + CO2. The protein operates within metabolic intermediate biosynthesis; 1-deoxy-D-xylulose 5-phosphate biosynthesis; 1-deoxy-D-xylulose 5-phosphate from D-glyceraldehyde 3-phosphate and pyruvate: step 1/1. Functionally, catalyzes the acyloin condensation reaction between C atoms 2 and 3 of pyruvate and glyceraldehyde 3-phosphate to yield 1-deoxy-D-xylulose-5-phosphate (DXP). The polypeptide is 1-deoxy-D-xylulose-5-phosphate synthase (Aquifex aeolicus (strain VF5)).